The primary structure comprises 157 residues: Deoxyuridine 5'-triphosphate nucleotidohydrolase (157 aa).

Residues 76–78, N89, 93–95, and K103 each bind substrate; these read RSG and TID.

The protein belongs to the dUTPase family. It depends on Mg(2+) as a cofactor.

It carries out the reaction dUTP + H2O = dUMP + diphosphate + H(+). It participates in pyrimidine metabolism; dUMP biosynthesis; dUMP from dCTP (dUTP route): step 2/2. Its function is as follows. This enzyme is involved in nucleotide metabolism: it produces dUMP, the immediate precursor of thymidine nucleotides and it decreases the intracellular concentration of dUTP so that uracil cannot be incorporated into DNA. The chain is Deoxyuridine 5'-triphosphate nucleotidohydrolase from Brucella abortus (strain 2308).